We begin with the raw amino-acid sequence, 733 residues long: LAKRKAGGEEEDGEWRPPATQKRQKAGSEAESADCYRSPFRKPLTQLTNRPLCLDSSQHEAFIRSILSKPFKVPIPNYKGPTGLRALGIKRAGLRSPLHDPFEEGALVLYEPPLLSAHEQLKIDKDKVPVHVVVDPVLSRVLRPHQREGVKFLWDCVTSRRIPGSHGCIMADEMGLGKTLQCITLMWTLLRQSPDCKPEIEKAMVVSPSSLVRNWYNEVEKWLGGRIQPLAIDGGSKEEIDRKLVGSMNQRGLRVPSPILIISYETFRLHAEALQKGSVGLVICDEGHRLKNSENQTYQALNSLNTPRRVLISGTPIQNDLLEYFSLVHFVNSGILGTAQEFKRHFELPILKGRDADASEAERQKGEERLKELISIVNRCLIRRTSDILSKYLPVKIEQVVCCRLTPLQAELYKNFLKQAKPVEELKEGKINVSSLSSITSLKKLCNHPALIYDKCVEEEEGFMGALDLFPAGYSTKSVEPQLSGKMLVLDYILAVTKSTSNDKVVLVSNYTQTLDLFEKLCRNRRYLYVRLDGTMSIKKRAKVVERFNSPSSPEFIFMLSSKAGGCGLNLIGANRLVMFDPDWNPANDEQAMARVWRDGQKKTCYIYRLLSTGTIEEKIFQRQTHKKALSSCVVDEEQDVERHFSLGELKELFSLNETTISDTHDKIKCRRCVNGHQVRPPPEGSDCTSDLSQWNHCADKRGLQDSVLKAAWDAAVTFTFHHHSHEEQRGIP.

Residues 1–35 form a disordered region; sequence LAKRKAGGEEEDGEWRPPATQKRQKAGSEAESADC. The 176-residue stretch at 159–334 folds into the Helicase ATP-binding domain; that stretch reads SRRIPGSHGC…FSLVHFVNSG (176 aa). Residue 172 to 179 coordinates ATP; the sequence is DEMGLGKT. The DEGH box signature appears at 285–288; sequence DEGH. A Helicase C-terminal domain is found at 488–642; it reads LVLDYILAVT…CVVDEEQDVE (155 aa). K504 is modified (N6-acetyllysine). At S561 the chain carries Phosphoserine; by NEK1.

The protein belongs to the SNF2/RAD54 helicase family. In terms of assembly, homohexamer. Interacts (via N-terminus) with RAD51. Interacts with NAP1L1. Interacts with BRD9; this interaction orchestrates RAD51-RAD54 complex formation. Acetylated. Acetylation promotes interaction with BRD9, and subsequently with RAD54, which is essential for homologous recombination (HR). In terms of processing, phosphorylated. Phosphorylation at Ser-561 by NEK1 specifically in G2 phase allows efficient removal of RAD51 filaments from DNA. As to expression, highly expressed in bursa, thymus, testis, and ovary. Low level of expression seen in all other organs tested.

It localises to the nucleus. In terms of biological role, plays an essential role in homologous recombination (HR) which is a major pathway for repairing DNA double-strand breaks (DSBs), single-stranded DNA (ssDNA) gaps, and stalled or collapsed replication forks. Acts as a molecular motor during the homology search and guides RAD51 ssDNA along a donor dsDNA thereby changing the homology search from the diffusion-based mechanism to a motor-guided mechanism. Plays also an essential role in RAD51-mediated synaptic complex formation which consists of three strands encased in a protein filament formed once homology is recognized. Once DNA strand exchange occured, dissociates RAD51 from nucleoprotein filaments formed on dsDNA. The chain is DNA repair and recombination protein RAD54-like (RAD54L) from Gallus gallus (Chicken).